The following is a 117-amino-acid chain: Ribosome-binding factor A (117 aa).

It belongs to the RbfA family. In terms of assembly, monomer. Binds 30S ribosomal subunits, but not 50S ribosomal subunits or 70S ribosomes.

It localises to the cytoplasm. Its function is as follows. One of several proteins that assist in the late maturation steps of the functional core of the 30S ribosomal subunit. Associates with free 30S ribosomal subunits (but not with 30S subunits that are part of 70S ribosomes or polysomes). Required for efficient processing of 16S rRNA. May interact with the 5'-terminal helix region of 16S rRNA. The protein is Ribosome-binding factor A of Streptococcus suis (strain 98HAH33).